Consider the following 274-residue polypeptide: NH(3)-dependent NAD(+) synthetase (274 aa).

Gly-46 to Ser-53 is a binding site for ATP. Mg(2+) is bound at residue Asp-52. Arg-140 contacts deamido-NAD(+). Thr-160 is an ATP binding site. Glu-165 contributes to the Mg(2+) binding site. Residues Lys-173 and Asp-180 each contribute to the deamido-NAD(+) site. 2 residues coordinate ATP: Lys-189 and Thr-211. His-260–Lys-261 is a binding site for deamido-NAD(+).

This sequence belongs to the NAD synthetase family. Homodimer.

It carries out the reaction deamido-NAD(+) + NH4(+) + ATP = AMP + diphosphate + NAD(+) + H(+). Its pathway is cofactor biosynthesis; NAD(+) biosynthesis; NAD(+) from deamido-NAD(+) (ammonia route): step 1/1. Its function is as follows. Catalyzes the ATP-dependent amidation of deamido-NAD to form NAD. Uses ammonia as a nitrogen source. This Streptococcus pyogenes serotype M6 (strain ATCC BAA-946 / MGAS10394) protein is NH(3)-dependent NAD(+) synthetase.